A 275-amino-acid polypeptide reads, in one-letter code: NADPH-dependent 7-cyano-7-deazaguanine reductase (275 aa).

Residue 81–83 (IES) participates in substrate binding. 83–84 (SK) serves as a coordination point for NADPH. Cys181 acts as the Thioimide intermediate in catalysis. Asp188 (proton donor) is an active-site residue. Residue 220–221 (HE) participates in substrate binding. Residue 249-250 (RG) coordinates NADPH.

Belongs to the GTP cyclohydrolase I family. QueF type 2 subfamily. As to quaternary structure, homodimer.

The protein resides in the cytoplasm. It carries out the reaction 7-aminomethyl-7-carbaguanine + 2 NADP(+) = 7-cyano-7-deazaguanine + 2 NADPH + 3 H(+). It functions in the pathway tRNA modification; tRNA-queuosine biosynthesis. In terms of biological role, catalyzes the NADPH-dependent reduction of 7-cyano-7-deazaguanine (preQ0) to 7-aminomethyl-7-deazaguanine (preQ1). The chain is NADPH-dependent 7-cyano-7-deazaguanine reductase from Xylella fastidiosa (strain M12).